We begin with the raw amino-acid sequence, 391 residues long: S-adenosylmethionine synthase 5 (391 aa).

Position 9 (Glu9) interacts with Mg(2+). His15 is an ATP binding site. Glu43 lines the K(+) pocket. 2 residues coordinate L-methionine: Glu56 and Gln99. ATP contacts are provided by residues 167 to 169 (DGK), 235 to 238 (SGRF), Asp246, 252 to 253 (RK), Ala269, Lys273, and Lys277. Asp246 is an L-methionine binding site. Position 277 (Lys277) interacts with L-methionine.

This sequence belongs to the AdoMet synthase family. Homotetramer. Mn(2+) serves as cofactor. Mg(2+) is required as a cofactor. The cofactor is Co(2+). It depends on K(+) as a cofactor.

It localises to the cytoplasm. The catalysed reaction is L-methionine + ATP + H2O = S-adenosyl-L-methionine + phosphate + diphosphate. Its pathway is amino-acid biosynthesis; S-adenosyl-L-methionine biosynthesis; S-adenosyl-L-methionine from L-methionine: step 1/1. In terms of biological role, catalyzes the formation of S-adenosylmethionine from methionine and ATP. The reaction comprises two steps that are both catalyzed by the same enzyme: formation of S-adenosylmethionine (AdoMet) and triphosphate, and subsequent hydrolysis of the triphosphate. The protein is S-adenosylmethionine synthase 5 (METK5) of Vitis vinifera (Grape).